The sequence spans 517 residues: MAPIALLSVSNKHGIVPLAESLHRMHGFQLLSSGGTAKVLEDAGLPVTRVAEHTGAAEILGGRVKTLHPRVHGGILAMRGDPDHEVDLEQHQIPPIDVVVVNLYPFRETVANPQVSWETAIENIDIGGPAMVRAAAKNHAHVAVLTRPDQYDRFLVALSDGVDDQLRRELALEAFEHTAAYDVAISHWMGERLTEQASQWLEAIPLRQRLRYGENPHQHAAWYSAPQQGWGGAIQLQGKELSTNNLLDLEAALATVREFGYGTEGAQQAVQDAAVVVKHTNPCGVAIGTGVASALSRALDADRVSAFGGIVALNGLVDATTARELTSLFLECVVAPGFEPEAREILATKANLRLLELAPGAIDAAGRDHIRTILGGVLVQDQDDQSIDPTSWTVASKRSPNAEENADLTFAWRLVRHVRSNAIVVARAGQSLGVGAGQMNRVGSARLALEAAGDQARGAVLASDGFFPFDDTVRLAANHGICAVIQPGGSKRDADSIAVCDDFGLAMVLTGKRHFLH.

Residues 1–146 (MAPIALLSVS…KNHAHVAVLT (146 aa)) enclose the MGS-like domain.

Belongs to the PurH family.

It carries out the reaction (6R)-10-formyltetrahydrofolate + 5-amino-1-(5-phospho-beta-D-ribosyl)imidazole-4-carboxamide = 5-formamido-1-(5-phospho-D-ribosyl)imidazole-4-carboxamide + (6S)-5,6,7,8-tetrahydrofolate. It catalyses the reaction IMP + H2O = 5-formamido-1-(5-phospho-D-ribosyl)imidazole-4-carboxamide. It participates in purine metabolism; IMP biosynthesis via de novo pathway; 5-formamido-1-(5-phospho-D-ribosyl)imidazole-4-carboxamide from 5-amino-1-(5-phospho-D-ribosyl)imidazole-4-carboxamide (10-formyl THF route): step 1/1. The protein operates within purine metabolism; IMP biosynthesis via de novo pathway; IMP from 5-formamido-1-(5-phospho-D-ribosyl)imidazole-4-carboxamide: step 1/1. In Prochlorococcus marinus (strain MIT 9313), this protein is Bifunctional purine biosynthesis protein PurH.